We begin with the raw amino-acid sequence, 553 residues long: Undecaprenyl phosphate-alpha-4-amino-4-deoxy-L-arabinose arabinosyl transferase (553 aa).

The next 11 membrane-spanning stretches (helical) occupy residues 6–26 (ACKVGAFLMALFFVITYLLPL), 89–109 (FGSVFCIFISAILLYRLAMMM), 115–135 (IAFATSLIYISMFLVFAIGTY), 180–200 (FMTKGFLALAVPVIVMLPIVI), 208–228 (IVCFGPLAIISAIAISLPWVI), 258–278 (IAPFWYYIPILILGVIPWLGL), 293–313 (NPEMFFLLCWFVVPLLFFSIA), 317–337 (LPTYILPCMAPLAMMMAKFGV), 352–372 (GMVNVFLGLLAVIVLFAMEVV), 386–406 (WVLAIVAFGIWGIIGYLCFAL), and 410–430 (YWLLAAFCSIVVSLVIGHALP).

It belongs to the glycosyltransferase 83 family.

The protein localises to the cell inner membrane. It carries out the reaction 4-amino-4-deoxy-alpha-L-arabinopyranosyl di-trans,octa-cis-undecaprenyl phosphate + lipid IVA = lipid IIA + di-trans,octa-cis-undecaprenyl phosphate.. Its pathway is lipopolysaccharide metabolism; 4-amino-4-deoxy-beta-L-arabinose-lipid A biosynthesis. Catalyzes the transfer of the L-Ara4N moiety of the glycolipid undecaprenyl phosphate-alpha-L-Ara4N to lipid A. The modified arabinose is attached to lipid A and is required for resistance to polymyxin and cationic antimicrobial peptides. This chain is Undecaprenyl phosphate-alpha-4-amino-4-deoxy-L-arabinose arabinosyl transferase (arnT), found in Photorhabdus laumondii subsp. laumondii (strain DSM 15139 / CIP 105565 / TT01) (Photorhabdus luminescens subsp. laumondii).